We begin with the raw amino-acid sequence, 440 residues long: Xylose isomerase (440 aa).

Residues His-101 and Asp-104 contribute to the active site. 7 residues coordinate Mg(2+): Glu-232, Glu-268, His-271, Asp-296, Asp-307, Asp-309, and Asp-339.

The protein belongs to the xylose isomerase family. In terms of assembly, homotetramer. Mg(2+) is required as a cofactor.

It localises to the cytoplasm. The enzyme catalyses alpha-D-xylose = alpha-D-xylulofuranose. The polypeptide is Xylose isomerase (Escherichia coli O157:H7).